The sequence spans 311 residues: Histidine decarboxylase proenzyme (311 aa).

Substrate is bound by residues aspartate 64 and serine 82. At serine 83 the chain carries Pyruvic acid (Ser). The Proton donor role is filled by glutamate 198.

The proenzyme is a hexamer of identical pi chains; each pi chain monomer is cleaved to form a small (or beta) chain and a large (or alpha) chain by non-hydrolytic self-catalysis. Pyruvate serves as cofactor.

It carries out the reaction L-histidine + H(+) = histamine + CO2. The polypeptide is Histidine decarboxylase proenzyme (hdcA) (Lactobacillus sp. (strain 30a)).